The following is a 286-amino-acid chain: Pre-mRNA-processing protein 45 (286 aa).

Disordered regions lie at residues 111 to 146 (TNDINYIKYENPNPNPNPNPNPNQEQQQQSSSSSSK) and 253 to 286 (KQRNEIRQQKQLQEKRLRDEKIKEIANRSKRRRY). A compositionally biased stretch (low complexity) spans 132-145 (PNQEQQQQSSSSSS). Over residues 253 to 279 (KQRNEIRQQKQLQEKRLRDEKIKEIAN) the composition is skewed to basic and acidic residues.

Belongs to the SNW family. As to quaternary structure, associated with the spliceosome.

Its subcellular location is the nucleus. Functionally, involved in pre-mRNA splicing. In Candida albicans (strain SC5314 / ATCC MYA-2876) (Yeast), this protein is Pre-mRNA-processing protein 45 (PRP45).